We begin with the raw amino-acid sequence, 157 residues long: Crossover junction endodeoxyribonuclease RuvC (157 aa).

Active-site residues include Asp-7, Glu-66, and Asp-139. Mg(2+) contacts are provided by Asp-7, Glu-66, and Asp-139.

It belongs to the RuvC family. As to quaternary structure, homodimer which binds Holliday junction (HJ) DNA. The HJ becomes 2-fold symmetrical on binding to RuvC with unstacked arms; it has a different conformation from HJ DNA in complex with RuvA. In the full resolvosome a probable DNA-RuvA(4)-RuvB(12)-RuvC(2) complex forms which resolves the HJ. It depends on Mg(2+) as a cofactor.

Its subcellular location is the cytoplasm. It carries out the reaction Endonucleolytic cleavage at a junction such as a reciprocal single-stranded crossover between two homologous DNA duplexes (Holliday junction).. Its function is as follows. The RuvA-RuvB-RuvC complex processes Holliday junction (HJ) DNA during genetic recombination and DNA repair. Endonuclease that resolves HJ intermediates. Cleaves cruciform DNA by making single-stranded nicks across the HJ at symmetrical positions within the homologous arms, yielding a 5'-phosphate and a 3'-hydroxyl group; requires a central core of homology in the junction. The consensus cleavage sequence is 5'-(A/T)TT(C/G)-3'. Cleavage occurs on the 3'-side of the TT dinucleotide at the point of strand exchange. HJ branch migration catalyzed by RuvA-RuvB allows RuvC to scan DNA until it finds its consensus sequence, where it cleaves and resolves the cruciform DNA. Required for efficient infection in a mouse model system. The chain is Crossover junction endodeoxyribonuclease RuvC from Helicobacter pylori (strain G27).